Reading from the N-terminus, the 238-residue chain is Orotidine 5'-phosphate decarboxylase (238 aa).

Residues D10, K32, 59–68 (DLKLHDIPNT), T122, R184, Q193, G213, and R214 each bind substrate. Residue K61 is the Proton donor of the active site.

The protein belongs to the OMP decarboxylase family. Type 1 subfamily. Homodimer.

It carries out the reaction orotidine 5'-phosphate + H(+) = UMP + CO2. The protein operates within pyrimidine metabolism; UMP biosynthesis via de novo pathway; UMP from orotate: step 2/2. In terms of biological role, catalyzes the decarboxylation of orotidine 5'-monophosphate (OMP) to uridine 5'-monophosphate (UMP). The chain is Orotidine 5'-phosphate decarboxylase from Bacillus mycoides (strain KBAB4) (Bacillus weihenstephanensis).